Here is a 20-residue protein sequence, read N- to C-terminus: Brevinin-1SPb (20 aa).

An intrachain disulfide couples cysteine 14 to cysteine 20.

Expressed by the skin glands.

The protein resides in the secreted. Antimicrobial peptide with activity against Gram-negative and Gram-positive bacteria (MIC=50 uM against E.coli, MIC=6 uM against S.aureus) and fungi (MIC=13 uM against C.albicans). Shows hemolytic activity on human erythrocytes (HC(50)=25 uM). The sequence is that of Brevinin-1SPb from Lithobates septentrionalis (Mink frog).